A 37-amino-acid chain; its full sequence is Potassium channel toxin alpha-KTx 1.11 (37 aa).

Disulfide bonds link Cys7/Cys28, Cys13/Cys33, and Cys17/Cys35.

Belongs to the short scorpion toxin superfamily. Potassium channel inhibitor family. Alpha-KTx 01 subfamily. As to expression, expressed by the venom gland.

The protein resides in the secreted. In terms of biological role, reversibly blocks the high conductance calcium-activated potassium channels composed of only alpha subunits (KCa1.1/KCNMA1). Unreversibly blocks the high conductance calcium-activated potassium channels composed of alpha and beta1 subunits (KCNMA1 and KCNMB1). Unreversibly and weakly blocks the high conductance calcium-activated potassium channels composed of alpha and beta4 (KCNMA1 and KCNMB4). The protein is Potassium channel toxin alpha-KTx 1.11 of Centruroides noxius (Mexican scorpion).